The following is a 274-amino-acid chain: MAHYFVGDVQGCFTELQKVLEKVDFNPSQDELWAVGDLVARGPDSLATLRFFKSLGDSAKTVLGNHDLHLMAIHGKLKRDKPSDNLKALLKADDINELIDWLRQQPLMRELPEQQLIMTHAGVPPQWSLETLRQESALVSHALKQDDYLEALISQMYTDTAERWEPTALGIARLRFCINALTRMRYLYVDGHLNFDCKQPPQDCTDPQLRPWYEYTSPLRQSHTLVFGHWAALMGNVNDKKLKALDTGCCWGEHLTLWHLEKDQKITQKRLKKS.

It belongs to the Ap4A hydrolase family.

It catalyses the reaction P(1),P(4)-bis(5'-adenosyl) tetraphosphate + H2O = 2 ADP + 2 H(+). Hydrolyzes diadenosine 5',5'''-P1,P4-tetraphosphate to yield ADP. This chain is Bis(5'-nucleosyl)-tetraphosphatase, symmetrical, found in Shewanella sp. (strain W3-18-1).